A 187-amino-acid polypeptide reads, in one-letter code: 2-oxoglutarate synthase subunit KorC (187 aa).

As to quaternary structure, heterotetramer of the KorA, KorB, KorC and KorD subunits.

The enzyme catalyses 2 oxidized [2Fe-2S]-[ferredoxin] + 2-oxoglutarate + CoA = succinyl-CoA + 2 reduced [2Fe-2S]-[ferredoxin] + CO2 + H(+). The chain is 2-oxoglutarate synthase subunit KorC (korC) from Methanocaldococcus jannaschii (strain ATCC 43067 / DSM 2661 / JAL-1 / JCM 10045 / NBRC 100440) (Methanococcus jannaschii).